Here is a 319-residue protein sequence, read N- to C-terminus: tRNA U34 carboxymethyltransferase (319 aa).

Residues Lys-88, Trp-102, Lys-107, Gly-126, 176 to 177, Met-192, Tyr-196, and Arg-311 contribute to the carboxy-S-adenosyl-L-methionine site; that span reads LE.

It belongs to the class I-like SAM-binding methyltransferase superfamily. CmoB family. As to quaternary structure, homotetramer.

It catalyses the reaction carboxy-S-adenosyl-L-methionine + 5-hydroxyuridine(34) in tRNA = 5-carboxymethoxyuridine(34) in tRNA + S-adenosyl-L-homocysteine + H(+). Its function is as follows. Catalyzes carboxymethyl transfer from carboxy-S-adenosyl-L-methionine (Cx-SAM) to 5-hydroxyuridine (ho5U) to form 5-carboxymethoxyuridine (cmo5U) at position 34 in tRNAs. In Pseudomonas savastanoi pv. phaseolicola (strain 1448A / Race 6) (Pseudomonas syringae pv. phaseolicola (strain 1448A / Race 6)), this protein is tRNA U34 carboxymethyltransferase.